A 92-amino-acid polypeptide reads, in one-letter code: Small ribosomal subunit protein bS20 (92 aa).

Positions 1–24 (MANTTSAKKATRKIARRTDVNKAR) are disordered.

It belongs to the bacterial ribosomal protein bS20 family.

Its function is as follows. Binds directly to 16S ribosomal RNA. This is Small ribosomal subunit protein bS20 from Rhizobium etli (strain ATCC 51251 / DSM 11541 / JCM 21823 / NBRC 15573 / CFN 42).